The following is a 277-amino-acid chain: Carbonyl reductase [NADPH] 1 (277 aa).

Position 2 is an N-acetylserine (S2). S2 and S30 each carry phosphoserine. Residues 10 to 34 (VTGG…GDVV), 63 to 64 (DI), and N90 contribute to the NADP(+) site. Glutathione is bound by residues 95–97 (FKV) and Q106. S140 is a binding site for substrate. Residue 193-194 (AY) coordinates glutathione. Residue Y194 is the Proton acceptor of the active site. NADP(+) is bound by residues 194-198 (YGVTK) and 231-233 (VRT). K239 carries the post-translational modification N6-1-carboxyethyl lysine.

This sequence belongs to the short-chain dehydrogenases/reductases (SDR) family. Monomer.

It localises to the cytoplasm. The enzyme catalyses a secondary alcohol + NADP(+) = a ketone + NADPH + H(+). It carries out the reaction prostaglandin F2alpha + NADP(+) = prostaglandin E2 + NADPH + H(+). The catalysed reaction is prostaglandin E1 + NADP(+) = 15-oxoprostaglandin E1 + NADPH + H(+). It catalyses the reaction menadione + NADPH + H(+) = menadiol + NADP(+). The enzyme catalyses prostaglandin D2 + NADP(+) = 15-oxoprostaglandin D2 + NADPH + H(+). It carries out the reaction prostaglandin E2 + NADP(+) = 15-oxoprostaglandin E2 + NADPH + H(+). The catalysed reaction is prostaglandin F2alpha + NADP(+) = 15-oxoprostaglandin F2alpha + NADPH + H(+). It catalyses the reaction daunorubicin + NADPH + H(+) = 13-dihydrodaunorubicin + NADP(+). The enzyme catalyses S-nitrosoglutathione + NADPH + H(+) = S-(hydroxysulfenamide)glutathione + NADP(+). It carries out the reaction a primary alcohol + NADP(+) = an aldehyde + NADPH + H(+). The catalysed reaction is cortisol + NADPH + H(+) = 20beta-dihydrocortisol + NADP(+). It catalyses the reaction corticosterone + NADPH + H(+) = 20beta-dihydrocorticosterone + NADP(+). In terms of biological role, NADPH-dependent reductase with broad substrate specificity. Catalyzes the reduction of a wide variety of carbonyl compounds including quinones, prostaglandins, menadione, plus various xenobiotics. Catalyzes the reduction of the antitumor anthracyclines doxorubicin and daunorubicin to the cardiotoxic compounds doxorubicinol and daunorubicinol. Can convert prostaglandin E to prostaglandin F2-alpha. Can bind glutathione, which explains its higher affinity for glutathione-conjugated substrates. Catalyzes the reduction of S-nitrosoglutathione. In addition, participates in the glucocorticoid metabolism by catalyzing the NADPH-dependent cortisol/corticosterone into 20beta-dihydrocortisol (20b-DHF) or 20beta-corticosterone (20b-DHB), which are weak agonists of NR3C1 and NR3C2 in adipose tissue. The polypeptide is Carbonyl reductase [NADPH] 1 (Pongo abelii (Sumatran orangutan)).